Here is a 241-residue protein sequence, read N- to C-terminus: Tryptophan synthase alpha chain (241 aa).

Catalysis depends on proton acceptor residues glutamate 31 and aspartate 42.

Belongs to the TrpA family. Tetramer of two alpha and two beta chains.

It catalyses the reaction (1S,2R)-1-C-(indol-3-yl)glycerol 3-phosphate + L-serine = D-glyceraldehyde 3-phosphate + L-tryptophan + H2O. It functions in the pathway amino-acid biosynthesis; L-tryptophan biosynthesis; L-tryptophan from chorismate: step 5/5. Functionally, the alpha subunit is responsible for the aldol cleavage of indoleglycerol phosphate to indole and glyceraldehyde 3-phosphate. In Staphylococcus saprophyticus subsp. saprophyticus (strain ATCC 15305 / DSM 20229 / NCIMB 8711 / NCTC 7292 / S-41), this protein is Tryptophan synthase alpha chain.